The sequence spans 451 residues: MFLGEDYLLTNRAAVRLFNEVKDLPIVDPHNHLDAKDIVENKPWSDIWEVEGATDHYVWELMRRCGISEEYITGSRSNKEKWLALAKVFPRFVGNPTYEWIHLDLWRRFNIKKVISEETAEEIWEETKKKLPEMTPQKLLRDMKVEILCTTDDPVSTLEHHRKAKEVVEGVTILPTWRPDRAMNVDKEGWKEYVEKMGERYGEDTSTLEGFLSALWKSHEHFKEHGCVASDHALLEPSVYYVDENRARAVHEKAFSGEKLTQDEINDYKAFMMIQFGKMNQETNWVTQLHIGALRDYRDSLFKTLGPDSGGDISTNFLRIAEGLRYFLNEFDGKLKIVLYVLDPTHLPTIATIARAFPNVYVGAPWWFNDSPFGMEMHLKYLASVDLLYNLAGMVTDSRKLLSFGSRTEMFRRVLSNVVGEMVEKGQIPIKEARELVKHVSYDGPKSLFFR.

The protein belongs to the metallo-dependent hydrolases superfamily. Uronate isomerase family.

It carries out the reaction D-glucuronate = D-fructuronate. It catalyses the reaction aldehydo-D-galacturonate = keto-D-tagaturonate. The protein operates within carbohydrate metabolism; pentose and glucuronate interconversion. The polypeptide is Uronate isomerase (Thermotoga sp. (strain RQ2)).